The sequence spans 876 residues: Alanine--tRNA ligase (876 aa).

Residues 2–461 (SKSTAEIRQA…VDSASEFKGY (460 aa)) are catalytic. Lys-74 carries the N6-acetyllysine modification. An editing region spans residues 553-705 (DEARRARIRL…EAVTGEGAIA (153 aa)). Zn(2+)-binding residues include His-564, His-568, Cys-666, and His-670. An important for oligomerization region spans residues 699–808 (TGEGAIATVH…STIIVLATVV (110 aa)). The segment at 766–875 (IDVNGVKLLV…SVKGWVSAKL (110 aa)) is C-Ala domain.

It belongs to the class-II aminoacyl-tRNA synthetase family. In terms of assembly, homotetramer. Requires Zn(2+) as cofactor.

The protein resides in the cytoplasm. It carries out the reaction tRNA(Ala) + L-alanine + ATP = L-alanyl-tRNA(Ala) + AMP + diphosphate. The enzyme catalyses (S)-lactate + ATP + H(+) = (S)-lactoyl-AMP + diphosphate. The catalysed reaction is (S)-lactoyl-AMP + L-lysyl-[protein] = N(6)-[(S)-lactoyl]-L-lysyl-[protein] + AMP + 2 H(+). With respect to regulation, acetylation at Lys-74 decreases the alanylation activity for tRNA(Ala); a protein that is fully acetylated is inactive in vitro. In terms of biological role, catalyzes the attachment of L-alanine to tRNA(Ala) in a two-step reaction: L-alanine is first activated by ATP to form Ala-AMP and then transferred to the acceptor end of tRNA(Ala). AlaRS also incorrectly activates the sterically smaller amino acid glycine as well as the sterically larger amino acid L-serine; generates 2-fold more mischarged Gly than Ser. These mischarged amino acids occur because the of inherent physicochemical limitations on discrimination between closely related amino acids (Ala, Gly and Ser) in the charging step. In presence of high levels of lactate, also acts as a protein lactyltransferase that mediates lactylation of lysine residues in target proteins. Functionally, edits mischarged Ser-tRNA(Ala) and Gly-tRNA(Ala) but not incorrectly charged Ser-tRNA(Thr). Dtd edits Gly-tRNA(Ala) 4-fold better than does AlaRS. Attaches Ala to transfer-messenger RNA (tmRNA, also known as 10Sa RNA, the product of the ssrA gene). tmRNA plays a major role in rescue of stalled ribosomes via trans-translation. The protein is Alanine--tRNA ligase (alaS) of Escherichia coli (strain K12).